The following is a 138-amino-acid chain: Small ribosomal subunit protein uS11c (138 aa).

The tract at residues 1–22 (MAKAIPKISSRRNGRIGSRKGA) is disordered. The segment covering 9-22 (SSRRNGRIGSRKGA) has biased composition (basic residues).

This sequence belongs to the universal ribosomal protein uS11 family. Part of the 30S ribosomal subunit.

Its subcellular location is the plastid. The protein localises to the chloroplast. The polypeptide is Small ribosomal subunit protein uS11c (Nicotiana tomentosiformis (Tobacco)).